Reading from the N-terminus, the 271-residue chain is Shikimate dehydrogenase (NADP(+)) (271 aa).

Residues 14-16 (SKS) and Thr-61 each bind shikimate. Lys-65 (proton acceptor) is an active-site residue. Positions 86 and 102 each coordinate shikimate. NADP(+) is bound by residues 126 to 130 (GAGGA), 149 to 154 (NRTFSR), and Met-213. Tyr-215 contributes to the shikimate binding site. Gly-238 is an NADP(+) binding site.

It belongs to the shikimate dehydrogenase family. Homodimer.

It carries out the reaction shikimate + NADP(+) = 3-dehydroshikimate + NADPH + H(+). Its pathway is metabolic intermediate biosynthesis; chorismate biosynthesis; chorismate from D-erythrose 4-phosphate and phosphoenolpyruvate: step 4/7. Its function is as follows. Involved in the biosynthesis of the chorismate, which leads to the biosynthesis of aromatic amino acids. Catalyzes the reversible NADPH linked reduction of 3-dehydroshikimate (DHSA) to yield shikimate (SA). The polypeptide is Shikimate dehydrogenase (NADP(+)) (Histophilus somni (strain 2336) (Haemophilus somnus)).